Here is a 342-residue protein sequence, read N- to C-terminus: Trace amine-associated receptor 3 (342 aa).

At M1–Y35 the chain is on the extracellular side. 2 N-linked (GlcNAc...) asparagine glycosylation sites follow: N18 and N25. 2 disulfides stabilise this stretch: C21–C185 and C104–C189. Residues L36 to I56 traverse the membrane as a helical segment. At S57 to F68 the chain is on the cytoplasmic side. A helical membrane pass occupies residues L69–M89. At V90–R150 the chain is on the extracellular side. A helical membrane pass occupies residues L151 to L168. Residues S169–N172 lie on the Cytoplasmic side of the membrane. The tract at residues V173–F186 is extracellular Loop 2 (ECL2). A helical membrane pass occupies residues V173–F193. At N194–G198 the chain is on the extracellular side. A helical transmembrane segment spans residues T199–V223. Residues S224–T256 are Cytoplasmic-facing. A helical membrane pass occupies residues L257–I277. Residues D278 to P286 are Extracellular-facing. Residues I287–I307 form a helical membrane-spanning segment. Over H308–H342 the chain is Cytoplasmic.

The protein belongs to the G-protein coupled receptor 1 family.

It is found in the cell membrane. In terms of biological role, olfactory receptor activated by several primary trace amines, including isoamylamine. Activated by isoamylamine and cyclohexylamine, but not to the corresponding alcohols, isoamylalcohol and cyclohexanol. This receptor is probably mediated by the G(s)-class of G-proteins which activate adenylate cyclase. This Rattus norvegicus (Rat) protein is Trace amine-associated receptor 3 (Taar3).